We begin with the raw amino-acid sequence, 2528 residues long: Squalestatin tetraketide synthase clz2 (2528 aa).

The Ketosynthase family 3 (KS3) domain maps to 14–409 (TVPIAIVGMS…GANAHVILES (396 aa)). Catalysis depends on for beta-ketoacyl synthase activity residues C187, H291, and H331. The segment at 420–457 (VNGHHQKNGTTNGHKGANGTTNELNGTNGTANGHDITT) is disordered. Residues 436-452 (ANGTTNELNGTNGTANG) show a composition bias toward low complexity. Residues 538-856 (GAQWFAMGRE…PYLSCLLRGQ (319 aa)) form a malonyl-CoA:ACP transacylase (MAT) domain region. The interval 925–1063 (HDLLGSLIPG…GRIAIELDTS (139 aa)) is N-terminal hotdog fold. One can recognise a PKS/mFAS DH domain in the interval 925-1239 (HDLLGSLIPG…NQSVGQIALQ (315 aa)). Residues 925 to 1239 (HDLLGSLIPG…NQSVGQIALQ (315 aa)) form a dehydratase (DH) domain region. The Proton acceptor; for dehydratase activity role is filled by H957. The interval 1083–1239 (TRSVDPSNLY…NQSVGQIALQ (157 aa)) is C-terminal hotdog fold. D1148 acts as the Proton donor; for dehydratase activity in catalysis. The methyltransferase (CMet) domain stretch occupies residues 1390–1590 (LYRYYTDAIK…GLDVELRDCD (201 aa)). The segment at 1817-2130 (GLIDTLQFSK…AGKHMGKIVI (314 aa)) is enoyl reductase (ER) (ER) domain. Residues 2153–2331 (ASYLIVGGLG…AVSIDLGMVQ (179 aa)) are ketoreductase (KR) domain. The segment at 2408–2430 (RARDAKEQSNSQGGGTDSKISPG) is disordered. Positions 2441–2518 (EAIDVVGRAI…ALATTVATKS (78 aa)) constitute a Carrier domain. The residue at position 2478 (S2478) is an O-(pantetheine 4'-phosphoryl)serine.

The protein operates within secondary metabolite biosynthesis. Its function is as follows. Highly reducing polyketide synthase (HR-PKS); part of the gene cluster that mediates the biosynthesis of squalestatin S1 (SQS1, also known as zaragozic acid A), a heavily oxidized fungal polyketide that offers potent cholesterol lowering activity by targeting squalene synthase (SS). SQS1 is composed of a 2,8-dioxobicyclic[3.2.1]octane-3,4,5-tricarboxyclic acid core that is connected to two lipophilic polyketide arms. These initial steps feature the priming of an unusual benzoic acid starter unit onto the highly reducing polyketide synthase clz14, followed by oxaloacetate extension and product release to generate a tricarboxylic acid containing product. The phenylalanine ammonia lyase (PAL) clz10 and the acyl-CoA ligase clz12 are involved in transforming phenylalanine into benzoyl-CoA. The citrate synthase-like protein clz17 is involved in connecting the C-alpha-carbons of the hexaketide chain and oxaloacetate to afford the tricarboxylic acid unit. The potential hydrolytic enzymes, clz11 and clz13, are in close proximity to pks2 and may participate in product release. On the other side, the tetraketide arm is synthesized by a the squalestatin tetraketide synthase clz2 and enzymatically esterified to the core in the last biosynthetic step, by the acetyltransferase clz6. The biosynthesis of the tetraketide must involve 3 rounds of chain extension. After the first and second rounds methyl-transfer occurs, and in all rounds of extension the ketoreductase and dehydratase are active. The enoyl reductase and C-MeT of clz2 are not active in the final round of extension. The acetyltransferase clz6 appears to have a broad substrate selectivity for its acyl CoA substrate, allowing the in vitro synthesis of novel squalestatins. The biosynthesis of SQS1 requires several oxidative steps likely performed by oxidoreductases clz3, clz15 and clz16. Finally, in support of the identification of the cluster as being responsible for SQS1 production, the cluster contains a gene encoding a putative squalene synthase (SS) clz20, suggesting a likely mechanism for self-resistance. The protein is Squalestatin tetraketide synthase clz2 of Cochliobolus lunatus (Filamentous fungus).